A 202-amino-acid chain; its full sequence is LexA repressor (202 aa).

Residues Gln-28 to Val-48 constitute a DNA-binding region (H-T-H motif). Residues Ser-120 and Lys-157 each act as for autocatalytic cleavage activity in the active site.

This sequence belongs to the peptidase S24 family. As to quaternary structure, homodimer.

The catalysed reaction is Hydrolysis of Ala-|-Gly bond in repressor LexA.. Represses a number of genes involved in the response to DNA damage (SOS response), including recA and lexA. In the presence of single-stranded DNA, RecA interacts with LexA causing an autocatalytic cleavage which disrupts the DNA-binding part of LexA, leading to derepression of the SOS regulon and eventually DNA repair. This chain is LexA repressor, found in Syntrophotalea carbinolica (strain DSM 2380 / NBRC 103641 / GraBd1) (Pelobacter carbinolicus).